The chain runs to 168 residues: Transmembrane protein 31 (168 aa).

The span at 1 to 11 shows a compositional bias: basic and acidic residues; the sequence is MRLTEKSEGEQ. Residues 1–63 form a disordered region; it reads MRLTEKSEGE…LPSRRTPTTS (63 aa). Composition is skewed to polar residues over residues 13-22 and 35-48; these read LKPNNSNAPN and HTPA…ADTQ. A compositionally biased stretch (low complexity) spans 49 to 63; that stretch reads PSRCRLPSRRTPTTS. 2 consecutive transmembrane segments (helical) span residues 119–139 and 148–168; these read IGLP…YKFF and FFIL…LIFF.

The protein localises to the membrane. This Homo sapiens (Human) protein is Transmembrane protein 31 (TMEM31).